We begin with the raw amino-acid sequence, 472 residues long: Aspartyl/glutamyl-tRNA(Asn/Gln) amidotransferase subunit B (472 aa).

This sequence belongs to the GatB/GatE family. GatB subfamily. As to quaternary structure, heterotrimer of A, B and C subunits.

It carries out the reaction L-glutamyl-tRNA(Gln) + L-glutamine + ATP + H2O = L-glutaminyl-tRNA(Gln) + L-glutamate + ADP + phosphate + H(+). It catalyses the reaction L-aspartyl-tRNA(Asn) + L-glutamine + ATP + H2O = L-asparaginyl-tRNA(Asn) + L-glutamate + ADP + phosphate + 2 H(+). Allows the formation of correctly charged Asn-tRNA(Asn) or Gln-tRNA(Gln) through the transamidation of misacylated Asp-tRNA(Asn) or Glu-tRNA(Gln) in organisms which lack either or both of asparaginyl-tRNA or glutaminyl-tRNA synthetases. The reaction takes place in the presence of glutamine and ATP through an activated phospho-Asp-tRNA(Asn) or phospho-Glu-tRNA(Gln). In Sulfolobus acidocaldarius (strain ATCC 33909 / DSM 639 / JCM 8929 / NBRC 15157 / NCIMB 11770), this protein is Aspartyl/glutamyl-tRNA(Asn/Gln) amidotransferase subunit B.